The chain runs to 914 residues: Eukaryotic initiation factor 4F subunit p130 (914 aa).

Pro residues predominate over residues 1–12 (MTDQRGPPPPHP). Disordered regions lie at residues 1 to 84 (MTDQ…YNNR), 128 to 205 (PPYT…NEAV), 240 to 351 (ERKK…VNKS), and 457 to 535 (IARN…LVPS). Polar residues predominate over residues 26–44 (NQYSGANNSQPNNHYNENL). The span at 59 to 73 (KNGKYGTNKYNNRNN) shows a compositional bias: low complexity. Ser-74 is modified (phosphoserine). Positions 145–155 (PKTTKIEITTK) are enriched in low complexity. Positions 156–195 (TGERLNLKKFHEEKKASKGEEKNDGVEQKSKSGTPFEKEA) are enriched in basic and acidic residues. Phosphothreonine is present on Thr-196. Residues 201–315 (ANEAVKDTLT…TGSVTKSVTF (115 aa)) form an interaction with PAB1 region. Residues 240 to 263 (ERKKNGLISETEKKQETSNHDNTD) are compositionally biased toward basic and acidic residues. Composition is skewed to polar residues over residues 298–325 (SVKT…SSSQ) and 339–348 (ISDTTGGKTV). Thr-301 is subject to Phosphothreonine. Basic and acidic residues predominate over residues 496–529 (RMGDDRRSNRGYTSRKDREKAAEKAEEQAPKEEI). Ser-503 carries the post-translational modification Phosphoserine. The MIF4G domain maps to 567 to 810 (ERKMKSLLNK…IDVKELREIK (244 aa)). Residues 833–914 (QLRQKKNSQR…ALMNNDGDSD (82 aa)) form a disordered region. Residues 841-867 (QRSNSRFNNHNQSNSNRYSSNRRNMQN) are compositionally biased toward low complexity. The segment covering 868–886 (TQRDSFASTKTGSFRNNQR) has biased composition (polar residues). At Ser-913 the chain carries Phosphoserine.

The protein belongs to the eukaryotic initiation factor 4G family. Component of the eIF4F complex, which composition varies with external and internal environmental conditions. It is composed of at least eIF4A (TIF1/TIF2), eIF4E (TIF45) and eIF4G (TIF4631 or TIF4632). Interacts with PAT1 in a RNA-dependent manner.

It localises to the cytoplasm. Functionally, component of the eIF4F complex, which interacts with the mRNA cap structure and serves as an initial point of assembly for the translation apparatus. Stimulates translation by interaction with polyadenylate-binding protein PAB1, bringing the 5'- and 3'-ends of the mRNA in proximity. The formation of this circular mRNP structure appears to be critical for the synergistic effects of the cap and the poly(A) tail in facilitating translation initiation, recycling of ribosomes, and mRNA stability. TIF4632 is probably essential when TIF4631 is missing. The polypeptide is Eukaryotic initiation factor 4F subunit p130 (Saccharomyces cerevisiae (strain ATCC 204508 / S288c) (Baker's yeast)).